The sequence spans 502 residues: Xyloglucan-specific endo-beta-1,4-glucanase BoGH5A (502 aa).

The signal sequence occupies residues Met1–Ser32. Cys33 is lipidated: N-palmitoyl cysteine. Cys33 is lipidated: S-diacylglycerol cysteine. The 61-residue stretch at Gly67–Ser127 folds into the BACON domain. Substrate is bound by residues Asn165, Val172, His251, and Asn296. The active-site Proton donor is the Glu297. The active-site Nucleophile is the Glu430. Trp472 provides a ligand contact to substrate.

The protein belongs to the glycosyl hydrolase 5 (cellulase A) family.

Its subcellular location is the cell outer membrane. It catalyses the reaction xyloglucan + H2O = xyloglucan oligosaccharides.. It participates in glucan metabolism; xyloglucan degradation. Its function is as follows. Catalyzes endohydrolysis of 1,4-beta-D-glucosidic linkages in xyloglucan with retention of the beta-configuration of the glycosyl residues in xyloglucan degradation. Cleaves the backbone of the 3 major types of natural xyloglucans (seed galactoxyloglucan from tamarind kernel, dicot fucogalactoxyloglucan from lettuce leaves, and solanaceous arabinogalactoxyloglucan from tomato fruit), to produce xyloglucan oligosaccharides. This chain is Xyloglucan-specific endo-beta-1,4-glucanase BoGH5A, found in Bacteroides ovatus (strain ATCC 8483 / DSM 1896 / JCM 5824 / BCRC 10623 / CCUG 4943 / NCTC 11153).